A 304-amino-acid chain; its full sequence is Ribosomal protein L11 methyltransferase (304 aa).

4 residues coordinate S-adenosyl-L-methionine: T156, G177, D199, and N240.

This sequence belongs to the methyltransferase superfamily. PrmA family.

It is found in the cytoplasm. The enzyme catalyses L-lysyl-[protein] + 3 S-adenosyl-L-methionine = N(6),N(6),N(6)-trimethyl-L-lysyl-[protein] + 3 S-adenosyl-L-homocysteine + 3 H(+). Functionally, methylates ribosomal protein L11. This chain is Ribosomal protein L11 methyltransferase, found in Symbiobacterium thermophilum (strain DSM 24528 / JCM 14929 / IAM 14863 / T).